We begin with the raw amino-acid sequence, 330 residues long: Aspartate--ammonia ligase (330 aa).

Belongs to the class-II aminoacyl-tRNA synthetase family. AsnA subfamily.

The protein resides in the cytoplasm. It carries out the reaction L-aspartate + NH4(+) + ATP = L-asparagine + AMP + diphosphate + H(+). It functions in the pathway amino-acid biosynthesis; L-asparagine biosynthesis; L-asparagine from L-aspartate (ammonia route): step 1/1. In Streptococcus pyogenes serotype M5 (strain Manfredo), this protein is Aspartate--ammonia ligase.